The primary structure comprises 857 residues: Protein STICHEL-like 2 (857 aa).

280–287 (GPRGTGKT) is an ATP binding site. Positions 299, 309, 312, and 315 each coordinate Zn(2+). Residues 544 to 576 (LTRHTSEEEMQKLRNALKILSDAEKHLRASKNQ) adopt a coiled-coil conformation. Disordered stretches follow at residues 593-629 (SSFATDENGRNQINKDVELSSTSSGCPGDVIKSDAEK) and 787-845 (ASSR…SSRL). Over residues 599-610 (ENGRNQINKDVE) the composition is skewed to basic and acidic residues. Residues 834–843 (QSETQNSKSS) show a composition bias toward polar residues.

Belongs to the DnaX/STICHEL family.

The protein is Protein STICHEL-like 2 of Arabidopsis thaliana (Mouse-ear cress).